A 289-amino-acid chain; its full sequence is MVVVTGREPDSRRQDGAMSSSDAEDDFLEPATPTATQAGHALPLLPQEFPEVVPLNIGGAHFTTRLSTLRCYEDTMLAAMFSGRHYIPTDSEGRYFIDRDGTHFGDVLNFLRSGDLPPRERVRAVYKEAQYYAIGPLLEQLENMQPLKGEKVRQAFLGLMPYYKDHLERIVEIARLRAVQRKARFAKLKVCVFKEEMPITPYECPLLNSLRFERSESDGQLFEHHCEVDVSFGPWEAVADVYDLLHCLVTDLSAQGLTVDHQCIGVCDKHLVNHYYCKRPIYEFKITWW.

The segment at 1–35 is disordered; the sequence is MVVVTGREPDSRRQDGAMSSSDAEDDFLEPATPTA. The BTB domain maps to 51–149; the sequence is EVVPLNIGGA…QLENMQPLKG (99 aa).

Interacts with CUL3.

It is found in the cell membrane. The protein resides in the cytoplasm. The protein localises to the cytosol. In terms of biological role, may be involved in the control of excitability of cortical neurons. The polypeptide is BTB/POZ domain-containing protein KCTD7 (KCTD7) (Homo sapiens (Human)).